Consider the following 193-residue polypeptide: Ribonuclease HII (193 aa).

The 190-residue stretch at 3 to 192 (SLVAGIDEVG…VRAVIDRSSA (190 aa)) folds into the RNase H type-2 domain. A divalent metal cation-binding residues include Asp-9, Glu-10, and Asp-101.

Belongs to the RNase HII family. Requires Mn(2+) as cofactor. It depends on Mg(2+) as a cofactor.

The protein resides in the cytoplasm. The enzyme catalyses Endonucleolytic cleavage to 5'-phosphomonoester.. Functionally, endonuclease that specifically degrades the RNA of RNA-DNA hybrids. This is Ribonuclease HII from Methylococcus capsulatus (strain ATCC 33009 / NCIMB 11132 / Bath).